We begin with the raw amino-acid sequence, 66 residues long: Small ribosomal subunit protein bS21 (66 aa).

The interval 47–66 (KAQEAARRKRKFARKRMYED) is disordered. The segment covering 53 to 66 (RRKRKFARKRMYED) has biased composition (basic residues).

The protein belongs to the bacterial ribosomal protein bS21 family.

The polypeptide is Small ribosomal subunit protein bS21 (Rickettsia bellii (strain RML369-C)).